A 100-amino-acid chain; its full sequence is Urease subunit gamma 2 (100 aa).

It belongs to the urease gamma subunit family. Heterotrimer of UreA (gamma), UreB (beta) and UreC (alpha) subunits. Three heterotrimers associate to form the active enzyme.

It is found in the cytoplasm. The catalysed reaction is urea + 2 H2O + H(+) = hydrogencarbonate + 2 NH4(+). It functions in the pathway nitrogen metabolism; urea degradation; CO(2) and NH(3) from urea (urease route): step 1/1. This is Urease subunit gamma 2 from Psychrobacter cryohalolentis (strain ATCC BAA-1226 / DSM 17306 / VKM B-2378 / K5).